Here is a 169-residue protein sequence, read N- to C-terminus: Der GTPase-activating protein YihI (169 aa).

Disordered regions lie at residues 1-98 (MKPS…PQAE) and 144-169 (GLSY…LRGN). Positions 10-19 (SKGHAKARRK) are enriched in basic residues. A compositionally biased stretch (basic and acidic residues) spans 20-30 (TREELDQEARD). Positions 31-40 (RKRQKKRRGH) are enriched in basic residues. Over residues 49-58 (GNTTSGSKGQ) the composition is skewed to polar residues. Over residues 147 to 159 (YDDDEEEEEDEKQ) the composition is skewed to acidic residues. Positions 160–169 (EDMMRLLRGN) are enriched in basic and acidic residues.

The protein belongs to the YihI family. As to quaternary structure, interacts with Der.

A GTPase-activating protein (GAP) that modifies Der/EngA GTPase function. May play a role in ribosome biogenesis. This Escherichia coli O139:H28 (strain E24377A / ETEC) protein is Der GTPase-activating protein YihI.